Reading from the N-terminus, the 537-residue chain is MVTLPLLLSILPLAAVFSSAASLQVRENHDCASIQPPQVPGAEILSVIGVQRRVEVAPFPPSPSKPNTTIDICSVNVTLSHMGVNDKVVVSVWLPLPDKWNGRFQATGGGGWAAGTFDLLMGPAALEGYSTAGTDAGVTVDPGSADKWALKEDGTVNYDLLENFASRSIHDMAIVGKAVTESYYKKPANYSYFYGCSNGGRQGMVEAQKYPDDFDGILAGAPAIYWPQFLTSTEWPQVVMQSEKVFPSQCVFEAFRKAGIAACDKLDGVEDGVVSNLDGCEFNPFALVGKKVKCGEESTTITLAQAWVAKKIYDGPKSTAKHALWDVLPVGASYVGLANSTIENGVPKIAPFVIGSSWIRSFLKKDVNFDLSTITYADMPKLFQQSIDEFDKIAGGSNPDLSALKKSGTKLLSWHGLADELIHPQGSIKYRQAVEHRMGGGSEVDNYYRLFLAPGVTHCGIGVNDGAAPIDTLKVLVRWVEKGEAPETMPATATDASGTTTLFTRNLCRYPLVPRYKGGDKNSADSFECAKDFGSHH.

Positions 1–22 are cleaved as a signal peptide; sequence MVTLPLLLSILPLAAVFSSAAS. Asn-67, Asn-76, and Asn-189 each carry an N-linked (GlcNAc...) asparagine glycan. Cystine bridges form between Cys-196/Cys-459, Cys-263/Cys-280, and Cys-508/Cys-529. The active-site Acyl-ester intermediate is the Ser-197. Ca(2+) is bound by residues Asp-264, Asp-267, Val-269, Asp-271, and Val-273. Asn-339 carries N-linked (GlcNAc...) asparagine glycosylation. Active-site charge relay system residues include Asp-419 and His-458.

It belongs to the tannase family.

The protein resides in the secreted. It carries out the reaction feruloyl-polysaccharide + H2O = ferulate + polysaccharide.. Functionally, hydrolyzes the feruloyl-arabinose ester bond in arabinoxylans as well as the feruloyl-galactose and feruloyl-arabinose ester bonds. This is Probable feruloyl esterase ARB_07085 from Arthroderma benhamiae (strain ATCC MYA-4681 / CBS 112371) (Trichophyton mentagrophytes).